A 515-amino-acid chain; its full sequence is Proline--tRNA ligase (515 aa).

Belongs to the class-II aminoacyl-tRNA synthetase family. ProS type 3 subfamily. As to quaternary structure, homodimer.

It localises to the cytoplasm. The enzyme catalyses tRNA(Pro) + L-proline + ATP = L-prolyl-tRNA(Pro) + AMP + diphosphate. In terms of biological role, catalyzes the attachment of proline to tRNA(Pro) in a two-step reaction: proline is first activated by ATP to form Pro-AMP and then transferred to the acceptor end of tRNA(Pro). The polypeptide is Proline--tRNA ligase (Novosphingobium aromaticivorans (strain ATCC 700278 / DSM 12444 / CCUG 56034 / CIP 105152 / NBRC 16084 / F199)).